A 194-amino-acid polypeptide reads, in one-letter code: Imidazoleglycerol-phosphate dehydratase (194 aa).

The protein belongs to the imidazoleglycerol-phosphate dehydratase family.

The protein localises to the cytoplasm. The catalysed reaction is D-erythro-1-(imidazol-4-yl)glycerol 3-phosphate = 3-(imidazol-4-yl)-2-oxopropyl phosphate + H2O. It functions in the pathway amino-acid biosynthesis; L-histidine biosynthesis; L-histidine from 5-phospho-alpha-D-ribose 1-diphosphate: step 6/9. This Caldicellulosiruptor saccharolyticus (strain ATCC 43494 / DSM 8903 / Tp8T 6331) protein is Imidazoleglycerol-phosphate dehydratase.